The primary structure comprises 136 residues: uncharacterized protein (136 aa).

The next 4 membrane-spanning stretches (helical) occupy residues 10 to 32, 44 to 66, 70 to 89, and 102 to 124; these read SAGIAFFVFIISAIILPGFFIWI, LRCGMANFAAVVITAVVAFILHF, VLLLPLLAFLIYLYVLKTLL, and IAGVVIFLLAVILLLIFGVWLLF.

It localises to the cell membrane. This is an uncharacterized protein from Archaeoglobus fulgidus (strain ATCC 49558 / DSM 4304 / JCM 9628 / NBRC 100126 / VC-16).